Consider the following 461-residue polypeptide: Cysteine--tRNA ligase (461 aa).

Cysteine 28 serves as a coordination point for Zn(2+). Positions 30–40 (ITVYDLCHIGH) match the 'HIGH' region motif. Cysteine 209, histidine 234, and glutamate 238 together coordinate Zn(2+). The 'KMSKS' region motif lies at 266–270 (KMSKS). Residue lysine 269 participates in ATP binding.

It belongs to the class-I aminoacyl-tRNA synthetase family. As to quaternary structure, monomer. Zn(2+) is required as a cofactor.

It is found in the cytoplasm. The enzyme catalyses tRNA(Cys) + L-cysteine + ATP = L-cysteinyl-tRNA(Cys) + AMP + diphosphate. The sequence is that of Cysteine--tRNA ligase from Salmonella dublin (strain CT_02021853).